We begin with the raw amino-acid sequence, 431 residues long: Phosphoribosylamine--glycine ligase (431 aa).

Positions 109–316 constitute an ATP-grasp domain; it reads KDFLARHGIP…LVDLLEAAID (208 aa). 135–196 contacts ATP; the sequence is VREKGTPIVV…EEFLDGEEAS (62 aa). Glu286 and Asn288 together coordinate Mg(2+).

It belongs to the GARS family. Requires Mg(2+) as cofactor. It depends on Mn(2+) as a cofactor.

It catalyses the reaction 5-phospho-beta-D-ribosylamine + glycine + ATP = N(1)-(5-phospho-beta-D-ribosyl)glycinamide + ADP + phosphate + H(+). It functions in the pathway purine metabolism; IMP biosynthesis via de novo pathway; N(1)-(5-phospho-D-ribosyl)glycinamide from 5-phospho-alpha-D-ribose 1-diphosphate: step 2/2. This is Phosphoribosylamine--glycine ligase from Xanthomonas axonopodis pv. citri (strain 306).